Reading from the N-terminus, the 197-residue chain is Peptidyl-tRNA hydrolase (197 aa).

A tRNA-binding site is contributed by tyrosine 18. Histidine 23 serves as the catalytic Proton acceptor. The tRNA site is built by tyrosine 68, asparagine 70, and asparagine 116.

The protein belongs to the PTH family. In terms of assembly, monomer.

Its subcellular location is the cytoplasm. It carries out the reaction an N-acyl-L-alpha-aminoacyl-tRNA + H2O = an N-acyl-L-amino acid + a tRNA + H(+). Its function is as follows. Hydrolyzes ribosome-free peptidyl-tRNAs (with 1 or more amino acids incorporated), which drop off the ribosome during protein synthesis, or as a result of ribosome stalling. Catalyzes the release of premature peptidyl moieties from peptidyl-tRNA molecules trapped in stalled 50S ribosomal subunits, and thus maintains levels of free tRNAs and 50S ribosomes. The protein is Peptidyl-tRNA hydrolase of Desulfotalea psychrophila (strain LSv54 / DSM 12343).